Reading from the N-terminus, the 128-residue chain is Phycoerythrin alpha-3 chain, chloroplastic (128 aa).

The N-terminal 52 residues, 1–52, are a transit peptide targeting the chloroplast; it reads MFAKTLASLAVIGSAAAYVPMMSMDMGRREVVQAGAAAAAVTPFLSGAPAGA. Lysine 56 carries the 5-hydroxylysine modification. The segment at 70–89 is disordered; it reads GCSRAPKESTGGKAGGQDDE. 15,16-dihydrobiliverdin contacts are provided by residues cysteine 71, arginine 73, 77-78, and lysine 93; that span reads ES.

This sequence belongs to the phycoerythrin family. Heterotetramer of 2 different alpha chains and 2 identical beta chains. The subunit composition could comprise of any combination of 2 out of 4 different alpha units with an invariant beta unit. Contains one covalently linked 15,16-dihydrobiliverdin chromophore.

The protein resides in the plastid. It is found in the chloroplast thylakoid membrane. Light-harvesting photosynthetic tetrapyrrole chromophore-protein from the phycobiliprotein complex. This Rhodomonas sp. (strain CS 24) (Chroomonas sp. (strain CS24)) protein is Phycoerythrin alpha-3 chain, chloroplastic (cpeA3).